The following is a 482-amino-acid chain: UDP-N-acetylmuramate--L-alanine ligase (482 aa).

129-135 (GTHGKTT) contributes to the ATP binding site.

The protein belongs to the MurCDEF family.

Its subcellular location is the cytoplasm. It catalyses the reaction UDP-N-acetyl-alpha-D-muramate + L-alanine + ATP = UDP-N-acetyl-alpha-D-muramoyl-L-alanine + ADP + phosphate + H(+). The protein operates within cell wall biogenesis; peptidoglycan biosynthesis. Cell wall formation. The chain is UDP-N-acetylmuramate--L-alanine ligase from Acinetobacter baumannii (strain AB307-0294).